The following is a 130-amino-acid chain: Small ribosomal subunit protein uS8 (130 aa).

It belongs to the universal ribosomal protein uS8 family. As to quaternary structure, part of the 30S ribosomal subunit.

Its function is as follows. One of the primary rRNA binding proteins, it binds directly to 16S rRNA central domain where it helps coordinate assembly of the platform of the 30S subunit. The polypeptide is Small ribosomal subunit protein uS8 (Pyrococcus horikoshii (strain ATCC 700860 / DSM 12428 / JCM 9974 / NBRC 100139 / OT-3)).